The chain runs to 259 residues: Type III pantothenate kinase (259 aa).

Aspartate 6–valine 13 provides a ligand contact to ATP. Substrate contacts are provided by residues tyrosine 100 and glycine 107–arginine 110. Aspartate 109 serves as the catalytic Proton acceptor. K(+) is bound at residue aspartate 129. Residue threonine 132 coordinates ATP. Residue threonine 184 participates in substrate binding.

The protein belongs to the type III pantothenate kinase family. As to quaternary structure, homodimer. NH4(+) is required as a cofactor. It depends on K(+) as a cofactor.

It localises to the cytoplasm. It catalyses the reaction (R)-pantothenate + ATP = (R)-4'-phosphopantothenate + ADP + H(+). Its pathway is cofactor biosynthesis; coenzyme A biosynthesis; CoA from (R)-pantothenate: step 1/5. Catalyzes the phosphorylation of pantothenate (Pan), the first step in CoA biosynthesis. The protein is Type III pantothenate kinase of Clostridium perfringens (strain ATCC 13124 / DSM 756 / JCM 1290 / NCIMB 6125 / NCTC 8237 / Type A).